The following is a 371-amino-acid chain: MSAQAQMRALLDQLMGTARDGDETRQRVKFTDDRVCKSHLLDCCPHDILAGTRMDLGECTKIHDLALRADYEIASKERDLFFELDAMDHLESFIAECDRRTELAKKRLAETQEEISAEVSAKAEKVHELNEEIGKLLAKAEQLGAEGNVDESQKILMEVEKVRAKKKEAEEEYRNSMPASSFQQQKLRVCEVCSAYLGLHDNDRRLADHFGGKLHLGFIQIREKLDQLRKTVAEKQEKRNQDRLRRREEREREERLGRRSGSRTRDRRRSRSRDRRRRRSRSTSRERRKFSRSRSRDRYRRHRSRSRSHSRGHRRASRDRSTKYKFSRERSLREESWEYGRNERGPTDWRLENSNGKTASRRSEEKEAGEI.

Coiled coils occupy residues 87–177 and 220–256; these read MDHL…RNSM and QIREKLDQLRKTVAEKQEKRNQDRLRRREEREREERL. Basic and acidic residues predominate over residues 232–257; that stretch reads VAEKQEKRNQDRLRRREEREREERLG. Residues 232–371 form a disordered region; that stretch reads VAEKQEKRNQ…RSEEKEAGEI (140 aa). Over residues 258–317 the composition is skewed to basic residues; that stretch reads RRSGSRTRDRRRSRSRDRRRRRSRSTSRERRKFSRSRSRDRYRRHRSRSRSHSRGHRRAS. 2 stretches are compositionally biased toward basic and acidic residues: residues 318-351 and 361-371; these read RDRSTKYKFSRERSLREESWEYGRNERGPTDWRL and RRSEEKEAGEI. Residues S336 and S363 each carry the phosphoserine modification.

This sequence belongs to the Luc7 family.

May bind to RNA via its Arg/Ser-rich domain. The sequence is that of Putative RNA-binding protein Luc7-like 1 (Luc7l) from Mus musculus (Mouse).